Here is a 275-residue protein sequence, read N- to C-terminus: Elongation factor Ts (275 aa).

Positions 76–79 are involved in Mg(2+) ion dislocation from EF-Tu; the sequence is TDFV.

The protein belongs to the EF-Ts family.

The protein resides in the cytoplasm. Its function is as follows. Associates with the EF-Tu.GDP complex and induces the exchange of GDP to GTP. It remains bound to the aminoacyl-tRNA.EF-Tu.GTP complex up to the GTP hydrolysis stage on the ribosome. The chain is Elongation factor Ts from Mycobacterium avium (strain 104).